The chain runs to 371 residues: MGRSLIFSGNMSLRISHLPRSSLPLQNPISGRTVNRTFRYRCTRILSNSFKSTTRLQTKAVLSEVSDQTRYPRIGAKTTGTISPAHLLEVVELAAKTGAEVVMEAVNKPRNITYKGLSDLVTDTDKASEAAILEVVKKNFSDHLILGEEGGIIGDSSSDYLWCIDPLDGTTNFAHGYPSFAVSVGVLYRGNPAAASVVEFVGGPMCWNTRTFSATAGGGALCNGQKIHVSKTDAVERALLITGFGYEHDDAWSTNMELFKEFTDVSRGVRRLGAAAVDMCHVALGIAESYWEYRLKPWDMAAGVLIVEEAGGAVTRMDGGKFSVFDRSVLVSNGVLHPKLLERIAPATENLKSKGIDFSLWFKPEDYHTEL.

Residues 1 to 60 (MGRSLIFSGNMSLRISHLPRSSLPLQNPISGRTVNRTFRYRCTRILSNSFKSTTRLQTKA) constitute a chloroplast transit peptide. Val61 carries the post-translational modification N-acetylvaline. Residues Glu148, Asp165, Leu167, and Asp168 each coordinate Mg(2+). Glu148 contributes to the substrate binding site. Substrate is bound by residues 167-170 (LDGT), 273-275 (GAA), Glu292, and Asp299. Mg(2+) is bound at residue Asp299.

The protein belongs to the inositol monophosphatase superfamily. Requires Mg(2+) as cofactor. Ubiquitous. Expressed in pistil and seed endosperm.

The protein localises to the plastid. Its subcellular location is the chloroplast stroma. The enzyme catalyses a myo-inositol phosphate + H2O = myo-inositol + phosphate. Its pathway is polyol metabolism; myo-inositol biosynthesis; myo-inositol from D-glucose 6-phosphate: step 2/2. Functionally, phosphatase acting preferentially on D-myoinositol 1-phosphate (D-Ins 1-P). This Arabidopsis thaliana (Mouse-ear cress) protein is Phosphatase IMPL1, chloroplastic (IMPL1).